A 747-amino-acid polypeptide reads, in one-letter code: Sushi domain-containing protein 1 (747 aa).

Positions M1 to G29 are cleaved as a signal peptide. Over A30 to M721 the chain is Extracellular. The EGF-like 1 domain maps to G35 to V72. Cystine bridges form between C39–C48, C42–C57, C59–C71, C77–C91, and C85–C100. One can recognise an EGF-like 2; calcium-binding domain in the interval D73–N112. N87 and N112 each carry an N-linked (GlcNAc...) asparagine glycan. Residues D125 to P162 enclose the EGF-like 3; calcium-binding domain. 6 disulfides stabilise this stretch: C129-C141, C135-C150, C179-C221, C206-C234, C239-C281, and C266-C294. Sushi domains follow at residues I177–E236 and I237–E296. The N-linked (GlcNAc...) asparagine glycan is linked to N193. N-linked (GlcNAc...) asparagine glycosylation occurs at N253. N-linked (GlcNAc...) asparagine glycans are attached at residues N348, N367, and N563. The chain crosses the membrane as a helical span at residues L722–L742. Residues S743–V747 are Cytoplasmic-facing.

It is found in the membrane. The chain is Sushi domain-containing protein 1 (SUSD1) from Homo sapiens (Human).